A 109-amino-acid polypeptide reads, in one-letter code: Large ribosomal subunit protein eL30 (109 aa).

This sequence belongs to the eukaryotic ribosomal protein eL30 family. Component of the large ribosomal subunit (LSU). Mature N.crassa ribosomes consist of a small (40S) and a large (60S) subunit. The 40S small subunit contains 1 molecule of ribosomal RNA (18S rRNA) and at least 32 different proteins. The large 60S subunit contains 3 rRNA molecules (26S, 5.8S and 5S rRNA) and at least 42 different proteins.

Its subcellular location is the cytoplasm. Its function is as follows. Component of the ribosome, a large ribonucleoprotein complex responsible for the synthesis of proteins in the cell. The small ribosomal subunit (SSU) binds messenger RNAs (mRNAs) and translates the encoded message by selecting cognate aminoacyl-transfer RNA (tRNA) molecules. The large subunit (LSU) contains the ribosomal catalytic site termed the peptidyl transferase center (PTC), which catalyzes the formation of peptide bonds, thereby polymerizing the amino acids delivered by tRNAs into a polypeptide chain. The nascent polypeptides leave the ribosome through a tunnel in the LSU and interact with protein factors that function in enzymatic processing, targeting, and the membrane insertion of nascent chains at the exit of the ribosomal tunnel. The chain is Large ribosomal subunit protein eL30 (rpl-30) from Neurospora crassa (strain ATCC 24698 / 74-OR23-1A / CBS 708.71 / DSM 1257 / FGSC 987).